A 340-amino-acid chain; its full sequence is Solute carrier family 35 member G3 (340 aa).

The interval 11 to 31 (PDFTQPSPPSTPSSLTSNHHN) is disordered. 9 consecutive transmembrane segments (helical) span residues 39 to 59 (TKGLFVALLGGGLSAGFVGPF), 69 to 89 (LPSLELLIFRCLFHLPIALIL), 107 to 127 (FLHAILNVLSIGCAYSAVQVV), 160 to 180 (AWCGLFGSTLGLIIIVGPGLG), 189 to 209 (LYTALGYVLAFLGGLALSLGL), 223 to 243 (TVAFLFGLVGLIVSVPGLFVL), 257 to 277 (CMVAVGLLALVSFVCVSYAVT), 283 to 303 (LVCAVLHSEVVVALMLQYYVL), and 307 to 327 (VAPSDIMGAGVVLGSIAIITA). The region spanning 51-176 (LSAGFVGPFS…STLGLIIIVG (126 aa)) is the EamA 1 domain. Residues 223–327 (TVAFLFGLVG…VLGSIAIITA (105 aa)) form the EamA 2 domain.

Belongs to the SLC35G solute transporter family.

Its subcellular location is the membrane. The polypeptide is Solute carrier family 35 member G3 (Slc35g3) (Rattus norvegicus (Rat)).